The primary structure comprises 211 residues: ATP phosphoribosyltransferase (211 aa).

Belongs to the ATP phosphoribosyltransferase family. Short subfamily. In terms of assembly, heteromultimer composed of HisG and HisZ subunits.

It localises to the cytoplasm. It catalyses the reaction 1-(5-phospho-beta-D-ribosyl)-ATP + diphosphate = 5-phospho-alpha-D-ribose 1-diphosphate + ATP. It functions in the pathway amino-acid biosynthesis; L-histidine biosynthesis; L-histidine from 5-phospho-alpha-D-ribose 1-diphosphate: step 1/9. Catalyzes the condensation of ATP and 5-phosphoribose 1-diphosphate to form N'-(5'-phosphoribosyl)-ATP (PR-ATP). Has a crucial role in the pathway because the rate of histidine biosynthesis seems to be controlled primarily by regulation of HisG enzymatic activity. This chain is ATP phosphoribosyltransferase, found in Pseudomonas fluorescens (strain SBW25).